Here is a 264-residue protein sequence, read N- to C-terminus: NADH-quinone oxidoreductase subunit B 1 (264 aa).

[4Fe-4S] cluster-binding residues include cysteine 42, cysteine 43, cysteine 108, and cysteine 138.

This sequence belongs to the complex I 20 kDa subunit family. In terms of assembly, NDH-1 is composed of 14 different subunits. Subunits NuoB, C, D, E, F, and G constitute the peripheral sector of the complex. Requires [4Fe-4S] cluster as cofactor.

The protein localises to the cell membrane. It catalyses the reaction a quinone + NADH + 5 H(+)(in) = a quinol + NAD(+) + 4 H(+)(out). In terms of biological role, NDH-1 shuttles electrons from NADH, via FMN and iron-sulfur (Fe-S) centers, to quinones in the respiratory chain. The immediate electron acceptor for the enzyme in this species is believed to be ubiquinone. Couples the redox reaction to proton translocation (for every two electrons transferred, four hydrogen ions are translocated across the cytoplasmic membrane), and thus conserves the redox energy in a proton gradient. The sequence is that of NADH-quinone oxidoreductase subunit B 1 from Chloroflexus aurantiacus (strain ATCC 29366 / DSM 635 / J-10-fl).